The following is a 117-amino-acid chain: Ribosome-binding factor A (117 aa).

Belongs to the RbfA family. As to quaternary structure, monomer. Binds 30S ribosomal subunits, but not 50S ribosomal subunits or 70S ribosomes.

It is found in the cytoplasm. Its function is as follows. One of several proteins that assist in the late maturation steps of the functional core of the 30S ribosomal subunit. Associates with free 30S ribosomal subunits (but not with 30S subunits that are part of 70S ribosomes or polysomes). Required for efficient processing of 16S rRNA. May interact with the 5'-terminal helix region of 16S rRNA. The polypeptide is Ribosome-binding factor A (Leuconostoc citreum (strain KM20)).